An 82-amino-acid chain; its full sequence is Small ribosomal subunit protein bS16 (82 aa).

The protein belongs to the bacterial ribosomal protein bS16 family.

The polypeptide is Small ribosomal subunit protein bS16 (Rippkaea orientalis (strain PCC 8801 / RF-1) (Cyanothece sp. (strain PCC 8801))).